The sequence spans 363 residues: 2,5-diketocamphane 1,2-monooxygenase 2 (363 aa).

Residues methionine 74 and 186 to 194 (TGLTKNSSS) each bind FMN.

This sequence belongs to the bacterial luciferase oxidoreductase family. Homodimer. Likely forms a loose transient complex with a P.putida flavin reductase that provides the required FMNH(2) to the enzyme.

The catalysed reaction is (1R,4R)-bornane-2,5-dione + FMNH2 + O2 = (1R,4R)-5-oxo-1,2-campholide + FMN + H2O + H(+). Its pathway is terpene metabolism; (R)-camphor degradation. Involved in the degradation and assimilation of (+)-camphor, which allows P.putida strain NCIMB 10007 to grow on this enantiomer of camphor as the sole carbon source. Catalyzes the FMNH(2)-dependent lactonization of 2,5-diketocamphane via a Baeyer-Villiger oxidation to produce the unstable lactone 5-oxo-1,2-campholide with (R,R) configuration, that presumably undergoes spontaneous hydrolysis to form 2-oxo-Delta(3)-4,5,5-trimethylcyclopentenylacetate. Is also able to convert (+)-camphor and norcamphor to the corresponding lactone in vitro. Shows no conversion of (-)-camphor, (+)-fenchone, (-)-fenchone, and (+)-nopinone. Acts on other bicyclic ketones and, to a lesser extent, on some 2- and 4-substituted monocyclic ketones. This chain is 2,5-diketocamphane 1,2-monooxygenase 2, found in Pseudomonas putida (Arthrobacter siderocapsulatus).